A 247-amino-acid polypeptide reads, in one-letter code: ATP synthase subunit a, chloroplastic (247 aa).

5 helical membrane passes run 38-58 (QVLI…TIAV), 95-115 (VPFI…GALL), 134-154 (INTT…AGLT), 199-219 (LVVV…VMFL), and 220-240 (GLFT…AYIG).

The protein belongs to the ATPase A chain family. In terms of assembly, F-type ATPases have 2 components, CF(1) - the catalytic core - and CF(0) - the membrane proton channel. CF(1) has five subunits: alpha(3), beta(3), gamma(1), delta(1), epsilon(1). CF(0) has four main subunits: a, b, b' and c.

The protein resides in the plastid. It localises to the chloroplast thylakoid membrane. Its function is as follows. Key component of the proton channel; it plays a direct role in the translocation of protons across the membrane. The polypeptide is ATP synthase subunit a, chloroplastic (Buxus microphylla (Littleleaf boxwood)).